The following is a 158-amino-acid chain: Disulfide bond formation protein B (158 aa).

At 1–7 (MKNSRPV) the chain is on the cytoplasmic side. A helical membrane pass occupies residues 8-24 (LFAVALASLLLLAVALY). Residues 25 to 42 (LQHVENMLPCPLCVIQRY) lie on the Periplasmic side of the membrane. A disulfide bond links cysteine 34 and cysteine 37. A helical membrane pass occupies residues 43 to 57 (AFAAIALICLVTAFR). Topologically, residues 58–63 (TEVTAR) are cytoplasmic. The chain crosses the membrane as a helical span at residues 64-81 (IGAALAALASLAGAGVAG). Residues 82 to 136 (WHIYIKAHPTVSCGIDPLETSLNTIPTAKLLPFLLQADGLCTTEYAPIMGLSIPQ) lie on the Periplasmic side of the membrane. Cysteine 94 and cysteine 122 are oxidised to a cystine. The helical transmembrane segment at 137 to 155 (WALVWFIVIALFLLHTAFR) threads the bilayer. Topologically, residues 156–158 (KKS) are cytoplasmic.

The protein belongs to the DsbB family.

Its subcellular location is the cell inner membrane. Its function is as follows. Required for disulfide bond formation in some periplasmic proteins. Acts by oxidizing the DsbA protein. This Herminiimonas arsenicoxydans protein is Disulfide bond formation protein B.